The primary structure comprises 346 residues: MHLMEFPREVILGKNLIQEINNVIKRLKLGSPGLVVYGPITKKIAGSNVEKIVKEEFEVYSITVKEAHINEVERVISKIRDKGIKWAIAVGGGSIIDVTKLASFKMGIPFISFPTTASHDGIASANASIKGLNVKTSIKAKPPIAVIADIDVIKTAPKRYLAAGVGDIVSNITAVRDWKLAHKLKGEYFSEYAASLSLMSAKMVIRDAEIIRLGQDEGIRKVVKALISSGVAMSIAGSSRPASGAEHLFSHALDMLLDKPALHGEQTGIGTIIMAYLHGINWKKIRDTLKIVGAPTTAYELGIDPEIIIEALTIAHTIRPERYTILGKEGITREAAEKAAKITGVI.

NAD(+)-binding positions include 93 to 97 and 115 to 118; these read GSIID and TTAS. D120 lines the substrate pocket. S124 contributes to the NAD(+) binding site. D167 provides a ligand contact to substrate. The Zn(2+) site is built by D167 and H247. Substrate is bound at residue H251. H263 lines the Zn(2+) pocket.

Belongs to the glycerol-1-phosphate dehydrogenase family. Zn(2+) is required as a cofactor.

It localises to the cytoplasm. The catalysed reaction is sn-glycerol 1-phosphate + NAD(+) = dihydroxyacetone phosphate + NADH + H(+). The enzyme catalyses sn-glycerol 1-phosphate + NADP(+) = dihydroxyacetone phosphate + NADPH + H(+). It functions in the pathway membrane lipid metabolism; glycerophospholipid metabolism. Its function is as follows. Catalyzes the NAD(P)H-dependent reduction of dihydroxyacetonephosphate (DHAP or glycerone phosphate) to glycerol 1-phosphate (G1P). The G1P thus generated is used as the glycerophosphate backbone of phospholipids in the cellular membranes of Archaea. In Pyrococcus horikoshii (strain ATCC 700860 / DSM 12428 / JCM 9974 / NBRC 100139 / OT-3), this protein is Glycerol-1-phosphate dehydrogenase [NAD(P)+].